A 400-amino-acid chain; its full sequence is Probable tRNA sulfurtransferase (400 aa).

Residues 60–164 (EPIIEKLKNV…KEATYITSGT (105 aa)) enclose the THUMP domain. ATP-binding positions include 182-183 (LL), 207-208 (HF), Arg264, Gly286, and Gln295.

Belongs to the ThiI family.

It localises to the cytoplasm. The enzyme catalyses [ThiI sulfur-carrier protein]-S-sulfanyl-L-cysteine + a uridine in tRNA + 2 reduced [2Fe-2S]-[ferredoxin] + ATP + H(+) = [ThiI sulfur-carrier protein]-L-cysteine + a 4-thiouridine in tRNA + 2 oxidized [2Fe-2S]-[ferredoxin] + AMP + diphosphate. The catalysed reaction is [ThiS sulfur-carrier protein]-C-terminal Gly-Gly-AMP + S-sulfanyl-L-cysteinyl-[cysteine desulfurase] + AH2 = [ThiS sulfur-carrier protein]-C-terminal-Gly-aminoethanethioate + L-cysteinyl-[cysteine desulfurase] + A + AMP + 2 H(+). The protein operates within cofactor biosynthesis; thiamine diphosphate biosynthesis. Functionally, catalyzes the ATP-dependent transfer of a sulfur to tRNA to produce 4-thiouridine in position 8 of tRNAs, which functions as a near-UV photosensor. Also catalyzes the transfer of sulfur to the sulfur carrier protein ThiS, forming ThiS-thiocarboxylate. This is a step in the synthesis of thiazole, in the thiamine biosynthesis pathway. The sulfur is donated as persulfide by IscS. The polypeptide is Probable tRNA sulfurtransferase (Oceanobacillus iheyensis (strain DSM 14371 / CIP 107618 / JCM 11309 / KCTC 3954 / HTE831)).